The following is a 207-amino-acid chain: MPKSYFITGIGTEVGKTVVSAIVAEALKADYWKPIQAGDLENSDSHKVKKLVSNKDSVFFKNACALNTPMSPHAAAEIDGIKLQIKNIKRPETEKDLVIEGAGGLMVPLNAKEVIADLISKEDLVILVSRHYLGSINHTLLSIEALKSRGIDKIGIIFSGDEHPTTEAAIKKLGKVKVVGRIEEEPYFDEMVVKEYAEKFRKRLCEI.

13-18 contributes to the ATP binding site; sequence EVGKTV. Threonine 17 contributes to the Mg(2+) binding site. Lysine 33 is a catalytic residue. ATP is bound by residues aspartate 44 and 100–103; that span reads EGAG. Mg(2+) is bound by residues aspartate 44 and glutamate 100.

It belongs to the dethiobiotin synthetase family. As to quaternary structure, homodimer. Requires Mg(2+) as cofactor.

It is found in the cytoplasm. The enzyme catalyses (7R,8S)-7,8-diammoniononanoate + CO2 + ATP = (4R,5S)-dethiobiotin + ADP + phosphate + 3 H(+). It participates in cofactor biosynthesis; biotin biosynthesis; biotin from 7,8-diaminononanoate: step 1/2. In terms of biological role, catalyzes a mechanistically unusual reaction, the ATP-dependent insertion of CO2 between the N7 and N8 nitrogen atoms of 7,8-diaminopelargonic acid (DAPA, also called 7,8-diammoniononanoate) to form a ureido ring. This is ATP-dependent dethiobiotin synthetase BioD from Christiangramia forsetii (strain DSM 17595 / CGMCC 1.15422 / KT0803) (Gramella forsetii).